A 469-amino-acid chain; its full sequence is Histone chaperone rtt-106 (469 aa).

Disordered stretches follow at residues 54-73 (EEPATKRRRVEAQTSGPNGA) and 364-469 (MAEQ…EGEE). Basic and acidic residues-rich tracts occupy residues 364-379 (MAEQRKAKKQLAENAK) and 402-415 (ELERAQKEEEQRLQ). Acidic residues-rich tracts occupy residues 416–433 (DEEDEEEEDYDPGSEGES) and 440–469 (SEEEEEEEDGEGEGDEDDDEDMGEGLEGEE).

Belongs to the RTT106 family. Interacts with histones H3 and H4.

Its subcellular location is the nucleus. The protein localises to the chromosome. Histones H3 and H4 chaperone involved in the nucleosome formation and heterochromatin silencing. Required for the deposition of H3K56ac-carrying H3-H4 complex onto newly-replicated DNA. Plays a role in the transcriptional regulation of the cell-cycle dependent histone genes by creating a repressive structure at the core histone gene promoter. In Neurospora crassa (strain ATCC 24698 / 74-OR23-1A / CBS 708.71 / DSM 1257 / FGSC 987), this protein is Histone chaperone rtt-106 (rtt-106).